We begin with the raw amino-acid sequence, 390 residues long: Imidazolonepropionase (390 aa).

Residues His-71 and His-73 each contribute to the Fe(3+) site. Residues His-71 and His-73 each coordinate Zn(2+). Residues Arg-80, Tyr-138, and His-165 each coordinate 4-imidazolone-5-propanoate. Residue Tyr-138 participates in N-formimidoyl-L-glutamate binding. His-228 serves as a coordination point for Fe(3+). Position 228 (His-228) interacts with Zn(2+). Gln-231 lines the 4-imidazolone-5-propanoate pocket. Asp-302 contributes to the Fe(3+) binding site. Residue Asp-302 participates in Zn(2+) binding. N-formimidoyl-L-glutamate-binding residues include Asn-304 and Gly-306. Ser-307 lines the 4-imidazolone-5-propanoate pocket.

This sequence belongs to the metallo-dependent hydrolases superfamily. HutI family. Requires Zn(2+) as cofactor. Fe(3+) serves as cofactor.

The protein resides in the cytoplasm. It carries out the reaction 4-imidazolone-5-propanoate + H2O = N-formimidoyl-L-glutamate. It functions in the pathway amino-acid degradation; L-histidine degradation into L-glutamate; N-formimidoyl-L-glutamate from L-histidine: step 3/3. Functionally, catalyzes the hydrolytic cleavage of the carbon-nitrogen bond in imidazolone-5-propanoate to yield N-formimidoyl-L-glutamate. It is the third step in the universal histidine degradation pathway. In Streptomyces griseus subsp. griseus (strain JCM 4626 / CBS 651.72 / NBRC 13350 / KCC S-0626 / ISP 5235), this protein is Imidazolonepropionase.